Reading from the N-terminus, the 551-residue chain is Putative BTB/POZ domain-containing protein L76 (551 aa).

In terms of domain architecture, BTB spans 19-90; the sequence is TDIILEIEDD…FYGQENDVID (72 aa).

The protein belongs to the mimivirus BTB/WD family.

This chain is Putative BTB/POZ domain-containing protein L76, found in Acanthamoeba polyphaga (Amoeba).